Reading from the N-terminus, the 526-residue chain is Bifunctional purine biosynthesis protein PurH (526 aa).

The region spanning 15–161 is the MGS-like domain; sequence DVVPIRRALI…KNHANVAIVV (147 aa).

This sequence belongs to the PurH family.

It catalyses the reaction (6R)-10-formyltetrahydrofolate + 5-amino-1-(5-phospho-beta-D-ribosyl)imidazole-4-carboxamide = 5-formamido-1-(5-phospho-D-ribosyl)imidazole-4-carboxamide + (6S)-5,6,7,8-tetrahydrofolate. It carries out the reaction IMP + H2O = 5-formamido-1-(5-phospho-D-ribosyl)imidazole-4-carboxamide. It functions in the pathway purine metabolism; IMP biosynthesis via de novo pathway; 5-formamido-1-(5-phospho-D-ribosyl)imidazole-4-carboxamide from 5-amino-1-(5-phospho-D-ribosyl)imidazole-4-carboxamide (10-formyl THF route): step 1/1. Its pathway is purine metabolism; IMP biosynthesis via de novo pathway; IMP from 5-formamido-1-(5-phospho-D-ribosyl)imidazole-4-carboxamide: step 1/1. The protein is Bifunctional purine biosynthesis protein PurH of Leifsonia xyli subsp. xyli (strain CTCB07).